The chain runs to 337 residues: Heme A synthase (337 aa).

Transmembrane regions (helical) follow at residues 6 to 26 (ITKW…IGGI), 93 to 113 (GRIT…KDVI), 118 to 138 (ILPY…GWYM), 154 to 174 (LAFH…QLIK), and 192 to 212 (LIFS…GAMV). A heme-binding site is contributed by His-256. 3 consecutive transmembrane segments (helical) span residues 258–278 (LGGY…LKIE), 285–305 (IAYF…ITLL), and 308–328 (VPII…SIII). His-316 contributes to the heme binding site.

Belongs to the COX15/CtaA family. Type 2 subfamily. As to quaternary structure, interacts with CtaB. It depends on heme b as a cofactor.

It localises to the cell membrane. The enzyme catalyses Fe(II)-heme o + 2 A + H2O = Fe(II)-heme a + 2 AH2. Its pathway is porphyrin-containing compound metabolism; heme A biosynthesis; heme A from heme O: step 1/1. Catalyzes the conversion of heme O to heme A by two successive hydroxylations of the methyl group at C8. The first hydroxylation forms heme I, the second hydroxylation results in an unstable dihydroxymethyl group, which spontaneously dehydrates, resulting in the formyl group of heme A. In Rickettsia felis (strain ATCC VR-1525 / URRWXCal2) (Rickettsia azadi), this protein is Heme A synthase.